The following is a 93-amino-acid chain: Signal recognition particle 19 kDa protein (93 aa).

Belongs to the SRP19 family. In terms of assembly, part of the signal recognition particle protein translocation system, which is composed of SRP and FtsY. Archaeal SRP consists of a 7S RNA molecule of 300 nucleotides and two protein subunits: SRP54 and SRP19.

It localises to the cytoplasm. Its function is as follows. Involved in targeting and insertion of nascent membrane proteins into the cytoplasmic membrane. Binds directly to 7S RNA and mediates binding of the 54 kDa subunit of the SRP. This Haloquadratum walsbyi (strain DSM 16790 / HBSQ001) protein is Signal recognition particle 19 kDa protein.